The following is a 192-amino-acid chain: HTH-type transcriptional regulator Hpr (192 aa).

The region spanning 12-156 is the HTH marR-type domain; it reads SIIFSHKFAQ…LLSIVRHVYG (145 aa). The segment at residues 62-85 is a DNA-binding region (H-T-H motif); the sequence is ISDIAKFGVMHVSTAFNFSKKLEE.

Homodimer.

Negative regulator of protease production and sporulation. This Halalkalibacterium halodurans (strain ATCC BAA-125 / DSM 18197 / FERM 7344 / JCM 9153 / C-125) (Bacillus halodurans) protein is HTH-type transcriptional regulator Hpr.